The chain runs to 154 residues: Myoglobin (154 aa).

Positions 2 to 148 constitute a Globin domain; the sequence is VLSDGEWQLV…FRKDIAAKYK (147 aa). A Phosphoserine modification is found at serine 4. Histidine 65 contacts nitrite. Histidine 65 contacts O2. Threonine 68 is modified (phosphothreonine). Heme b is bound at residue histidine 94.

Belongs to the globin family. As to quaternary structure, monomeric.

Its subcellular location is the cytoplasm. The protein resides in the sarcoplasm. It carries out the reaction Fe(III)-heme b-[protein] + nitric oxide + H2O = Fe(II)-heme b-[protein] + nitrite + 2 H(+). The enzyme catalyses H2O2 + AH2 = A + 2 H2O. Functionally, monomeric heme protein which primary function is to store oxygen and facilitate its diffusion within muscle tissues. Reversibly binds oxygen through a pentacoordinated heme iron and enables its timely and efficient release as needed during periods of heightened demand. Depending on the oxidative conditions of tissues and cells, and in addition to its ability to bind oxygen, it also has a nitrite reductase activity whereby it regulates the production of bioactive nitric oxide. Under stress conditions, like hypoxia and anoxia, it also protects cells against reactive oxygen species thanks to its pseudoperoxidase activity. The protein is Myoglobin of Balaena mysticetus (Bowhead whale).